We begin with the raw amino-acid sequence, 272 residues long: AA9 family lytic polysaccharide monooxygenase G (272 aa).

The N-terminal stretch at 1–22 is a signal peptide; sequence MKGAGSASFLLTLLSTITRTSA. Position 23 (H23) interacts with Cu(2+). N60 carries an N-linked (GlcNAc...) asparagine glycan. 2 disulfide bridges follow: C78–C202 and C121–C125. H110 contributes to the Cu(2+) binding site. O2 contacts are provided by H188 and Q197. A Cu(2+)-binding site is contributed by Y199.

This sequence belongs to the polysaccharide monooxygenase AA9 family. Cu(2+) is required as a cofactor.

It localises to the secreted. The catalysed reaction is [(1-&gt;4)-beta-D-glucosyl]n+m + reduced acceptor + O2 = 4-dehydro-beta-D-glucosyl-[(1-&gt;4)-beta-D-glucosyl]n-1 + [(1-&gt;4)-beta-D-glucosyl]m + acceptor + H2O.. In terms of biological role, lytic polysaccharide monooxygenase (LPMO) that depolymerizes crystalline and amorphous polysaccharides via the oxidation of scissile alpha- or beta-(1-4)-glycosidic bonds, yielding C1 or C4 oxidation products. Catalysis by LPMOs requires the reduction of the active-site copper from Cu(II) to Cu(I) by a reducing agent and H(2)O(2) or O(2) as a cosubstrate. Acts preferentially on crystalline regions of cellulose such as highly crystalline algae cellulose. The sequence is that of AA9 family lytic polysaccharide monooxygenase G from Emericella nidulans (strain FGSC A4 / ATCC 38163 / CBS 112.46 / NRRL 194 / M139) (Aspergillus nidulans).